A 218-amino-acid chain; its full sequence is Ribose-5-phosphate isomerase A (218 aa).

Substrate-binding positions include 28-31, 81-84, and 94-97; these read TGST, DGAD, and KGGG. Glu103 serves as the catalytic Proton acceptor. Lys121 serves as a coordination point for substrate.

It belongs to the ribose 5-phosphate isomerase family. As to quaternary structure, homodimer.

The catalysed reaction is aldehydo-D-ribose 5-phosphate = D-ribulose 5-phosphate. The protein operates within carbohydrate degradation; pentose phosphate pathway; D-ribose 5-phosphate from D-ribulose 5-phosphate (non-oxidative stage): step 1/1. Catalyzes the reversible conversion of ribose-5-phosphate to ribulose 5-phosphate. The chain is Ribose-5-phosphate isomerase A from Sodalis glossinidius (strain morsitans).